We begin with the raw amino-acid sequence, 537 residues long: Glutamyl-tRNA(Gln) amidotransferase subunit A, chloroplastic/mitochondrial (537 aa).

Active-site charge relay system residues include K116 and S191. S215 acts as the Acyl-ester intermediate in catalysis.

This sequence belongs to the amidase family. GatA subfamily. As to quaternary structure, subunit of the heterotrimeric GatCAB amidotransferase (AdT) complex, composed of A, B and C subunits.

It localises to the mitochondrion. The protein resides in the plastid. It is found in the chloroplast stroma. The enzyme catalyses L-glutamyl-tRNA(Gln) + L-glutamine + ATP + H2O = L-glutaminyl-tRNA(Gln) + L-glutamate + ADP + phosphate + H(+). Allows the formation of correctly charged Gln-tRNA(Gln) through the transamidation of misacylated Glu-tRNA(Gln) in chloroplasts and mitochondria. The reaction takes place in the presence of glutamine and ATP through an activated gamma-phospho-Glu-tRNA(Gln). The protein is Glutamyl-tRNA(Gln) amidotransferase subunit A, chloroplastic/mitochondrial of Arabidopsis thaliana (Mouse-ear cress).